A 445-amino-acid polypeptide reads, in one-letter code: MAAQASEDLKKLDLNGQAGDSKAAAATAGQAEAGEAEDDSDDDEVDGNAAPEGAASGAAKKKKKRKPKKKKKGGAKVQSSPPRVPISQLFPNNQYPEGEIVEYKNENSYRTTNEEKRYLDRMNNDFLQEYRQGAEVHRQVRQYAQKNIKPGQTLTEIAEGIEDAVRALTGHQGLEEGDNLKGGMGFPCGLSINHCAAHYTPNAGNKMVLQQGDVMKVDFGAHLNGRIVDSAFTMAFDPVYDPLLEAVKDATNTGIREAGIDVRMSDIGAAIQETMESYEVEINGQMHPVKCIRNLNGHNIDQHVIHGGKSVPIVKGGDQTKMEEGEVFAIETFGSTGKGYVREDMETSHYALVPNATPVPLRLSSAKNLLNVINKNFGTLPFCRRYLDRLGQDKYLLGLNNLVSSGIVQDYPPLCDIKGSYTAQFEHTIVLRPTVKEVISRGDDY.

Residues methionine 1–asparagine 92 are disordered. Residues alanine 18–alanine 33 show a composition bias toward low complexity. Residues glycine 34–aspartate 46 show a composition bias toward acidic residues. Residues glycine 47–alanine 58 show a composition bias toward low complexity. Residues alanine 59–glycine 74 are compositionally biased toward basic residues. Histidine 198 provides a ligand contact to substrate. A divalent metal cation is bound by residues aspartate 218, aspartate 229, and histidine 298. A substrate-binding site is contributed by histidine 306. A divalent metal cation is bound by residues glutamate 331 and glutamate 426.

It belongs to the peptidase M24A family. Methionine aminopeptidase eukaryotic type 2 subfamily. The cofactor is Co(2+). Requires Zn(2+) as cofactor. Mn(2+) serves as cofactor. Fe(2+) is required as a cofactor.

The protein localises to the cytoplasm. It catalyses the reaction Release of N-terminal amino acids, preferentially methionine, from peptides and arylamides.. Cotranslationally removes the N-terminal methionine from nascent proteins. The N-terminal methionine is often cleaved when the second residue in the primary sequence is small and uncharged (Met-Ala-, Cys, Gly, Pro, Ser, Thr, or Val). This is Methionine aminopeptidase 2-2 from Aspergillus terreus (strain NIH 2624 / FGSC A1156).